Consider the following 313-residue polypeptide: MAGFQHLSVMPEEVLRFLSPRPGGCYLDGTLGGGGHAALVAERCAPGGGTLIGMDRDLEALKAAAERLSRFGDAVRLLHGNFADIATRLDSLGVDALDGFVLDLGVSSHQLDTARRGFSFQQEGALDMRMDGDSGETAADLVNRLPEHELERIIREYGEERWAKRIASFIVRARSEAPIENTLRLVDIIKGAIPKAKWEERLHPATRTFQALRIAVNHELESLERGLKSAIDRLKPGGRGVVISFHSLEDRIVKHVFREYAAGCTCPRNLPVCVCGRQPRVRVLTGRPVTATEEELRDNPRSRSAKLRAVEKL.

S-adenosyl-L-methionine-binding positions include 34-36 (GGH), Asp55, Phe82, Asp103, and Gln110.

This sequence belongs to the methyltransferase superfamily. RsmH family.

It is found in the cytoplasm. It carries out the reaction cytidine(1402) in 16S rRNA + S-adenosyl-L-methionine = N(4)-methylcytidine(1402) in 16S rRNA + S-adenosyl-L-homocysteine + H(+). Specifically methylates the N4 position of cytidine in position 1402 (C1402) of 16S rRNA. This chain is Ribosomal RNA small subunit methyltransferase H, found in Pelobacter propionicus (strain DSM 2379 / NBRC 103807 / OttBd1).